Reading from the N-terminus, the 467-residue chain is uncharacterized protein (467 aa).

Residues 1-60 are disordered; sequence MVRVSRGCQSCVDAKLQSTPSPSPSKSPSPTESPEQCLQKRQSGEQVVLPSRPFPRTSPR.

Its function is as follows. Involved in osmoadaptation. This is an uncharacterized protein from Emericella nidulans (strain FGSC A4 / ATCC 38163 / CBS 112.46 / NRRL 194 / M139) (Aspergillus nidulans).